The primary structure comprises 224 residues: MDKQQLAKMIDHTILKPEADKASIEKLCKEALEYNFASVCINPTNVELAAKLLKGSEVKVCTVIGFPLGANTMEVKAFETKDAIAKGADEVDMVINIGRLKDKDYEYVEKDIKAVVDAADKKALTKVIIETCLLTEEEKVKACELAKKAGADFVKTSTGFSTGGATPEDIKLMRETVGPDMGVKASGGVRSIEDAEAVIKNGATRIGASASIAICEGKVSDSTY.

Asp92 acts as the Proton donor/acceptor in catalysis. Lys155 (schiff-base intermediate with acetaldehyde) is an active-site residue. The active-site Proton donor/acceptor is the Lys184.

Belongs to the DeoC/FbaB aldolase family. DeoC type 1 subfamily.

It is found in the cytoplasm. The enzyme catalyses 2-deoxy-D-ribose 5-phosphate = D-glyceraldehyde 3-phosphate + acetaldehyde. Its pathway is carbohydrate degradation; 2-deoxy-D-ribose 1-phosphate degradation; D-glyceraldehyde 3-phosphate and acetaldehyde from 2-deoxy-alpha-D-ribose 1-phosphate: step 2/2. Its function is as follows. Catalyzes a reversible aldol reaction between acetaldehyde and D-glyceraldehyde 3-phosphate to generate 2-deoxy-D-ribose 5-phosphate. The sequence is that of Deoxyribose-phosphate aldolase from Clostridium perfringens (strain ATCC 13124 / DSM 756 / JCM 1290 / NCIMB 6125 / NCTC 8237 / Type A).